The sequence spans 697 residues: Choline transporter-like protein 2 (697 aa).

The Cytoplasmic portion of the chain corresponds to 1-30 (MDMEEKPKYGEPRKFDPSFKGPIQNRGCTD). The helical transmembrane segment at 31-51 (IVCCIIFIIAILGYLAVGILA) threads the bilayer. Topologically, residues 52 to 226 (WTHGDPRKVI…KIFEDYTKSW (175 aa)) are extracellular. N-linked (GlcNAc...) asparagine glycans are attached at residues Asn-113 and Asn-204. Residues 227-247 (YWILICLLIAVVLSLIFIVLL) traverse the membrane as a helical segment. The Cytoplasmic segment spans residues 248–249 (RF). The chain crosses the membrane as a helical span at residues 250–270 (LAGVMVWVMILMVVAVIAYGI). Residues 271–309 (AHCSIKYVSLKDTPGSNITLQQLGFQPDFAVYLHIRQTW) lie on the Extracellular side of the membrane. Asn-287 is a glycosylation site (N-linked (GlcNAc...) asparagine). Residues 310-330 (LAFIIILAILELIIILLLIFL) form a helical membrane-spanning segment. The Cytoplasmic segment spans residues 331–353 (RNRIRVAVELMKEASRAIGYVMS). A helical transmembrane segment spans residues 354 to 374 (SLVFPIFTFFLLAIVIAFWGV). Residues 375–435 (NAVFLSTSSE…YGGETPYHKY (61 aa)) are Extracellular-facing. N-linked (GlcNAc...) asparagine glycosylation is found at Asn-391 and Asn-406. The helical transmembrane segment at 436–456 (LILLQFYNVFLFFWCANFVTA) threads the bilayer. The Cytoplasmic portion of the chain corresponds to 457-498 (LGQMTLAGAFASYYWAFDKSKDMPAFPLCASLGRSLRYHTGS). A helical transmembrane segment spans residues 499-519 (LAFGSLLLAIVQVIRVLLEYI). The Extracellular portion of the chain corresponds to 520-593 (DHKLKGAENK…RVVVLDKVTD (74 aa)). Residues 594–614 (FILFLGKLLIVGLVGIFAFFF) form a helical membrane-spanning segment. Topologically, residues 615-632 (FSGQTDAFKGTAPSLHYY) are cytoplasmic. The chain crosses the membrane as a helical span at residues 633 to 653 (WVPILTVLVCSYLIAHGFFSV). At 654 to 697 (YAMCVDTLFLCFLEDLERNDGSAERPYLMSENLLNVLKKKNQAN) the chain is on the extracellular side.

The protein belongs to the CTL (choline transporter-like) family.

It is found in the cell membrane. The protein resides in the mitochondrion outer membrane. The catalysed reaction is choline(out) + n H(+)(in) = choline(in) + n H(+)(out). It carries out the reaction ethanolamine(out) + n H(+)(in) = ethanolamine(in) + n H(+)(out). Functionally, choline/H+ antiporter, mainly in mitochodria. Also acts as a low-affinity ethanolamine/H+ antiporter, regulating the supply of extracellular ethanolamine (Etn) for the CDP-Etn pathway, redistribute intracellular Etn and balance the CDP-Cho and CDP-Etn arms of the Kennedy pathway. The polypeptide is Choline transporter-like protein 2 (slc44a2) (Danio rerio (Zebrafish)).